The primary structure comprises 400 residues: Tektin-B1 (400 aa).

Coiled-coil stretches lie at residues 35-81 (TRLS…AKAL), 236-294 (FALR…LENR), and 310-353 (GLVN…LELK).

The protein belongs to the tektin family. As to quaternary structure, may form a heterodimer with tektin a or exist as a homodimer. In terms of tissue distribution, cilia and flagella.

The protein localises to the cytoplasm. It is found in the cytoskeleton. In terms of biological role, structural component of ciliary and flagellar microtubules. This is Tektin-B1 from Strongylocentrotus purpuratus (Purple sea urchin).